The following is a 467-amino-acid chain: ATP-dependent protease ATPase subunit HslU (467 aa).

Residues V22 and G64–E69 each bind ATP. The segment at Q149–E192 is disordered. A compositionally biased stretch (basic and acidic residues) spans E178–E192. The ATP site is built by D280, E345, and R417.

This sequence belongs to the ClpX chaperone family. HslU subfamily. As to quaternary structure, a double ring-shaped homohexamer of HslV is capped on each side by a ring-shaped HslU homohexamer. The assembly of the HslU/HslV complex is dependent on binding of ATP.

The protein localises to the cytoplasm. Functionally, ATPase subunit of a proteasome-like degradation complex; this subunit has chaperone activity. The binding of ATP and its subsequent hydrolysis by HslU are essential for unfolding of protein substrates subsequently hydrolyzed by HslV. HslU recognizes the N-terminal part of its protein substrates and unfolds these before they are guided to HslV for hydrolysis. This is ATP-dependent protease ATPase subunit HslU from Staphylococcus aureus (strain MRSA252).